The following is a 428-amino-acid chain: Adenylosuccinate synthetase (428 aa).

GTP-binding positions include 12–18 (GDEGKGK) and 40–42 (GHT). Asp13 (proton acceptor) is an active-site residue. 2 residues coordinate Mg(2+): Asp13 and Gly40. Residues 13-16 (DEGK), 38-41 (NAGH), Thr128, Arg142, Gln222, Thr237, and Arg301 contribute to the IMP site. The active-site Proton donor is the His41. Position 297–303 (297–303 (VNTGRAR)) interacts with substrate. Residues Arg303, 329–331 (KLD), and 411–413 (STS) contribute to the GTP site.

Belongs to the adenylosuccinate synthetase family. Homodimer. The cofactor is Mg(2+).

Its subcellular location is the cytoplasm. It carries out the reaction IMP + L-aspartate + GTP = N(6)-(1,2-dicarboxyethyl)-AMP + GDP + phosphate + 2 H(+). Its pathway is purine metabolism; AMP biosynthesis via de novo pathway; AMP from IMP: step 1/2. Plays an important role in the de novo pathway of purine nucleotide biosynthesis. Catalyzes the first committed step in the biosynthesis of AMP from IMP. This chain is Adenylosuccinate synthetase, found in Caulobacter sp. (strain K31).